The sequence spans 423 residues: Kynureninase (423 aa).

Pyridoxal 5'-phosphate contacts are provided by residues Leu-105, Ser-106, 133–136 (FPSD), Asp-218, His-221, and Tyr-243. Lys-244 is subject to N6-(pyridoxal phosphate)lysine. Pyridoxal 5'-phosphate-binding residues include Trp-273 and Asn-301.

Belongs to the kynureninase family. In terms of assembly, homodimer. Requires pyridoxal 5'-phosphate as cofactor.

It carries out the reaction L-kynurenine + H2O = anthranilate + L-alanine + H(+). The catalysed reaction is 3-hydroxy-L-kynurenine + H2O = 3-hydroxyanthranilate + L-alanine + H(+). It participates in amino-acid degradation; L-kynurenine degradation; L-alanine and anthranilate from L-kynurenine: step 1/1. It functions in the pathway cofactor biosynthesis; NAD(+) biosynthesis; quinolinate from L-kynurenine: step 2/3. In terms of biological role, catalyzes the cleavage of L-kynurenine (L-Kyn) and L-3-hydroxykynurenine (L-3OHKyn) into anthranilic acid (AA) and 3-hydroxyanthranilic acid (3-OHAA), respectively. This chain is Kynureninase, found in Xanthomonas axonopodis pv. citri (strain 306).